The chain runs to 446 residues: Phosphoglucosamine mutase (446 aa).

The active-site Phosphoserine intermediate is the Ser-103. 4 residues coordinate Mg(2+): Ser-103, Asp-242, Asp-244, and Asp-246. Ser-103 is subject to Phosphoserine.

Belongs to the phosphohexose mutase family. Mg(2+) serves as cofactor. Activated by phosphorylation.

It catalyses the reaction alpha-D-glucosamine 1-phosphate = D-glucosamine 6-phosphate. Functionally, catalyzes the conversion of glucosamine-6-phosphate to glucosamine-1-phosphate. This Vibrio cholerae serotype O1 (strain ATCC 39315 / El Tor Inaba N16961) protein is Phosphoglucosamine mutase.